Here is a 103-residue protein sequence, read N- to C-terminus: MQNQQIRIRLKAFDHRLIDQSTQEIVETAKRTGAQVRGPIPLPTRKERFTVLVSPHVNKDARDQYEIRTHKRVLDIVQPTDKTVDALMKLDLAAGVEVQISLG.

Belongs to the universal ribosomal protein uS10 family. In terms of assembly, part of the 30S ribosomal subunit.

Functionally, involved in the binding of tRNA to the ribosomes. This chain is Small ribosomal subunit protein uS10, found in Stutzerimonas stutzeri (strain A1501) (Pseudomonas stutzeri).